We begin with the raw amino-acid sequence, 221 residues long: Serine protease inhibitor 7 (221 aa).

An N-terminal signal peptide occupies residues 1–22; the sequence is MKCLFLLCLCLVPIVVFSSTFT. A propeptide spanning residues 23–28 is cleaved from the precursor; sequence SKNPIN. The short motif at 25–30 is the Vacuolar targeting signal element; it reads NPINLP. 2 disulfide bridges follow: C76-C125 and C174-C191.

This sequence belongs to the protease inhibitor I3 (leguminous Kunitz-type inhibitor) family. In terms of tissue distribution, tubers. Not detected in root, stem, leaves or flower bud.

It is found in the vacuole. Its function is as follows. Inhibitor of trypsin (serine protease). May protect the plant by inhibiting proteases of invading organisms. The polypeptide is Serine protease inhibitor 7 (Solanum tuberosum (Potato)).